Reading from the N-terminus, the 286-residue chain is Shikimate dehydrogenase (NADP(+)) (286 aa).

Shikimate-binding positions include 22–24 (SRS) and threonine 71. Lysine 75 acts as the Proton acceptor in catalysis. Glutamate 87 is a binding site for NADP(+). The shikimate site is built by asparagine 96 and aspartate 111. Residues 136–140 (GAGGA), 160–165 (NRTAAR), and isoleucine 225 each bind NADP(+). Residue tyrosine 227 participates in shikimate binding. Glycine 248 provides a ligand contact to NADP(+).

This sequence belongs to the shikimate dehydrogenase family. In terms of assembly, homodimer.

The catalysed reaction is shikimate + NADP(+) = 3-dehydroshikimate + NADPH + H(+). It participates in metabolic intermediate biosynthesis; chorismate biosynthesis; chorismate from D-erythrose 4-phosphate and phosphoenolpyruvate: step 4/7. Functionally, involved in the biosynthesis of the chorismate, which leads to the biosynthesis of aromatic amino acids. Catalyzes the reversible NADPH linked reduction of 3-dehydroshikimate (DHSA) to yield shikimate (SA). The polypeptide is Shikimate dehydrogenase (NADP(+)) (Sinorhizobium fredii (strain NBRC 101917 / NGR234)).